We begin with the raw amino-acid sequence, 271 residues long: uncharacterized protein (271 aa).

Belongs to the anhydro-N-acetylmuramic acid kinase family.

This is an uncharacterized protein from Yersinia enterocolitica.